The primary structure comprises 422 residues: Beta-1,3-galactosyltransferase 2 (422 aa).

Residues 1 to 24 lie on the Cytoplasmic side of the membrane; that stretch reads MLQWRRRHCCFAKMTWNAKRSLFR. A helical; Signal-anchor for type II membrane protein membrane pass occupies residues 25–45; the sequence is THLIGVLSLVFLFAMFLFFNH. Residues 46–422 lie on the Lumenal side of the membrane; that stretch reads HDWLPGRAGF…AGRYRHRKLH (377 aa). N-linked (GlcNAc...) asparagine glycosylation is found at Asn-75, Asn-100, Asn-119, Asn-176, and Asn-226. Residues 90-110 are disordered; sequence TLRPQTATNSNNTDLSPQGVT.

It belongs to the glycosyltransferase 31 family. Mn(2+) is required as a cofactor. Detected in heart and brain.

The protein localises to the golgi apparatus membrane. The catalysed reaction is an N-acetyl-beta-D-glucosaminyl derivative + UDP-alpha-D-galactose = a beta-D-galactosyl-(1-&gt;3)-N-acetyl-beta-D-glucosaminyl derivative + UDP + H(+). It carries out the reaction a beta-D-GlcNAc-(1-&gt;3)-beta-D-Gal-(1-&gt;4)-beta-D-Glc-(1&lt;-&gt;1)-Cer(d18:1(4E)) + UDP-alpha-D-galactose = a beta-D-Gal-(1-&gt;3)-beta-D-GlcNAc-(1-&gt;3)-beta-D-Gal-(1-&gt;4)-beta-D-Glc-(1&lt;-&gt;1')-Cer(d18:1(4E)) + UDP + H(+). It catalyses the reaction a neolactoside IV(3)-beta-GlcNAc-nLc4Cer(d18:1(4E)) + UDP-alpha-D-galactose = a neolactoside IV(3)-beta-[Gal-beta-(1-&gt;3)-GlcNAc]-nLc4Cer(d18:1(4E)) + UDP + H(+). It functions in the pathway protein modification; protein glycosylation. Its function is as follows. Beta-1,3-galactosyltransferase that transfers galactose from UDP-galactose to substrates with a terminal beta-N-acetylglucosamine (beta-GlcNAc) residue. Can also utilize substrates with a terminal galactose residue, albeit with lower efficiency. Involved in the biosynthesis of the carbohydrate moieties of glycolipids and glycoproteins. Inactive towards substrates with terminal alpha-N-acetylglucosamine (alpha-GlcNAc) or alpha-N-acetylgalactosamine (alpha-GalNAc) residues. The chain is Beta-1,3-galactosyltransferase 2 from Homo sapiens (Human).